Consider the following 118-residue polypeptide: Small ribosomal subunit protein uS13 (118 aa).

Positions 94 to 118 are disordered; the sequence is GLPLRGQRTRTNARTRKGPRKAIRK.

The protein belongs to the universal ribosomal protein uS13 family. In terms of assembly, part of the 30S ribosomal subunit. Forms a loose heterodimer with protein S19. Forms two bridges to the 50S subunit in the 70S ribosome.

Functionally, located at the top of the head of the 30S subunit, it contacts several helices of the 16S rRNA. In the 70S ribosome it contacts the 23S rRNA (bridge B1a) and protein L5 of the 50S subunit (bridge B1b), connecting the 2 subunits; these bridges are implicated in subunit movement. Contacts the tRNAs in the A and P-sites. The polypeptide is Small ribosomal subunit protein uS13 (Stenotrophomonas maltophilia (strain R551-3)).